Reading from the N-terminus, the 51-residue chain is MRDKIKLVSTAGTGHFYTTTKNKKTTPDKLEMKKFDPKVRKHVMYREDKIK.

It belongs to the bacterial ribosomal protein bL33 family.

The polypeptide is Large ribosomal subunit protein bL33 (Acidithiobacillus ferrooxidans (strain ATCC 53993 / BNL-5-31) (Leptospirillum ferrooxidans (ATCC 53993))).